Here is a 1221-residue protein sequence, read N- to C-terminus: Probable serine/threonine-protein kinase DDB_G0286465 (1221 aa).

Disordered regions lie at residues 1–37 (MTLRLDTSLKRGASRNIPPIPTFSSVSNENLSSSPYT), 104–133 (FSPSTGRTKNNNNNNNNNINNNNYKKNDNQ), and 173–263 (ENNS…NNNE). 4 stretches are compositionally biased toward low complexity: residues 24 to 37 (SSVSNENLSSSPYT), 112 to 127 (KNNNNNNNNNINNNNY), 173 to 192 (ENNSQNNNNNKYQINNNMQK), and 204 to 263 (NNNN…NNNE). Positions 186–627 (INNNMQKTGG…PYKLLDHPFF (442 aa)) constitute a Protein kinase domain. 192–200 (KTGGRNGSV) contributes to the ATP binding site. Lys-271 provides a ligand contact to ATP. The segment covering 324-344 (NVNNNNSNNNNNNSNNNITNS) has biased composition (low complexity). Positions 324–346 (NVNNNNSNNNNNNSNNNITNSRY) are disordered. Asp-448 functions as the Proton acceptor in the catalytic mechanism. Composition is skewed to low complexity over residues 538-550 (SPSSSSTTSTSTS) and 559-584 (DSSSSASSSSSSSSSSSSSSSSSLPK). Disordered regions lie at residues 538-604 (SPSS…PEKR), 712-782 (PNLS…KEKL), 823-858 (KFEKKQRQIQDSEKVNKNEEENQTKDDADNISPPLP), 959-1008 (KENI…SYCN), and 1105-1152 (KKQE…QQEK). Over residues 591–604 (RSKDNQSKLDPEKR) the composition is skewed to basic and acidic residues. Residues 725–738 (KKQLQQYQQQQKQQ) show a composition bias toward low complexity. The segment covering 746 to 756 (DDEEEKEEEEK) has biased composition (acidic residues). 2 stretches are compositionally biased toward basic and acidic residues: residues 757 to 769 (EKEKEKEKEKEKE) and 823 to 850 (KFEKKQRQIQDSEKVNKNEEENQTKDDA). Over residues 959–993 (KENIINFHNNNNNNNNNNNNNNNNNNNNNNNNNNN) the composition is skewed to low complexity.

The protein belongs to the protein kinase superfamily. Ser/Thr protein kinase family.

It carries out the reaction L-seryl-[protein] + ATP = O-phospho-L-seryl-[protein] + ADP + H(+). The catalysed reaction is L-threonyl-[protein] + ATP = O-phospho-L-threonyl-[protein] + ADP + H(+). This is Probable serine/threonine-protein kinase DDB_G0286465 from Dictyostelium discoideum (Social amoeba).